The primary structure comprises 476 residues: Glutamate--tRNA ligase (476 aa).

A 'HIGH' region motif is present at residues 9-19 (PSPTGTLHLGT). Positions 248 to 252 (KLSKR) match the 'KMSKS' region motif. Lys251 provides a ligand contact to ATP.

The protein belongs to the class-I aminoacyl-tRNA synthetase family. Glutamate--tRNA ligase type 1 subfamily. In terms of assembly, monomer.

The protein localises to the cytoplasm. It carries out the reaction tRNA(Glu) + L-glutamate + ATP = L-glutamyl-tRNA(Glu) + AMP + diphosphate. Catalyzes the attachment of glutamate to tRNA(Glu) in a two-step reaction: glutamate is first activated by ATP to form Glu-AMP and then transferred to the acceptor end of tRNA(Glu). This chain is Glutamate--tRNA ligase, found in Prochlorococcus marinus (strain NATL2A).